The sequence spans 133 residues: CDGSH iron-sulfur domain-containing protein 2 homolog (133 aa).

Residues 1 to 35 (MEPISHLVKSSLPNYLSSLPIPDSVGGWFKLSFKD) lie on the Lumenal side of the membrane. The helical transmembrane segment at 36–58 (WLALIPPTVVVAGIGYTAYLAYC) threads the bilayer. Topologically, residues 59–133 (PAAKAICSAK…DNVGPIVIKK (75 aa)) are cytoplasmic. The [2Fe-2S] cluster site is built by cysteine 100, cysteine 102, cysteine 111, and histidine 115.

The protein belongs to the CISD protein family. CISD2 subfamily. [2Fe-2S] cluster is required as a cofactor.

It localises to the endoplasmic reticulum membrane. In Drosophila yakuba (Fruit fly), this protein is CDGSH iron-sulfur domain-containing protein 2 homolog.